A 310-amino-acid chain; its full sequence is L-lactate dehydrogenase (310 aa).

NAD(+) is bound by residues Met-10–Val-11, Asp-32, Tyr-62, and Gly-76–Val-77. Substrate-binding positions include Gln-79, Arg-85, and Asn-117 to Asp-120. NAD(+) is bound by residues Ala-115–Asn-117 and Ser-140. A substrate-binding site is contributed by Asp-145–Arg-148. Residues Arg-150 and Gln-162–Tyr-167 contribute to the beta-D-fructose 1,6-bisphosphate site. Residue His-172 is the Proton acceptor of the active site. Tyr-218 is modified (phosphotyrosine). Thr-227 provides a ligand contact to substrate.

It belongs to the LDH/MDH superfamily. LDH family. In terms of assembly, homotetramer.

The protein localises to the cytoplasm. The enzyme catalyses (S)-lactate + NAD(+) = pyruvate + NADH + H(+). It functions in the pathway fermentation; pyruvate fermentation to lactate; (S)-lactate from pyruvate: step 1/1. Allosterically activated by fructose 1,6-bisphosphate (FBP). It binds two fructose 1,6-bisphosphate (FBP) molecules per tetramer. In terms of biological role, catalyzes the conversion of lactate to pyruvate. In Thermus caldophilus, this protein is L-lactate dehydrogenase.